The chain runs to 715 residues: Elongation factor G (715 aa).

The tr-type G domain occupies 8–290; sequence NRYRNIGICA…AVIDFLPAPT (283 aa). GTP contacts are provided by residues 17–24, 88–92, and 142–145; these read AHVDAGKT, DTPGH, and NKMD.

This sequence belongs to the TRAFAC class translation factor GTPase superfamily. Classic translation factor GTPase family. EF-G/EF-2 subfamily.

Its subcellular location is the cytoplasm. Functionally, catalyzes the GTP-dependent ribosomal translocation step during translation elongation. During this step, the ribosome changes from the pre-translocational (PRE) to the post-translocational (POST) state as the newly formed A-site-bound peptidyl-tRNA and P-site-bound deacylated tRNA move to the P and E sites, respectively. Catalyzes the coordinated movement of the two tRNA molecules, the mRNA and conformational changes in the ribosome. This Ectopseudomonas mendocina (strain ymp) (Pseudomonas mendocina) protein is Elongation factor G.